Consider the following 288-residue polypeptide: Diaminopimelate epimerase (288 aa).

Asn13, Gln51, and Asn71 together coordinate substrate. The Proton donor role is filled by Cys80. Substrate is bound by residues 81–82 (GN), Asn166, Asn200, and 218–219 (ER). Cys227 serves as the catalytic Proton acceptor. 228–229 (GT) contributes to the substrate binding site.

The protein belongs to the diaminopimelate epimerase family. As to quaternary structure, homodimer.

The protein resides in the cytoplasm. The catalysed reaction is (2S,6S)-2,6-diaminopimelate = meso-2,6-diaminopimelate. The protein operates within amino-acid biosynthesis; L-lysine biosynthesis via DAP pathway; DL-2,6-diaminopimelate from LL-2,6-diaminopimelate: step 1/1. Functionally, catalyzes the stereoinversion of LL-2,6-diaminopimelate (L,L-DAP) to meso-diaminopimelate (meso-DAP), a precursor of L-lysine and an essential component of the bacterial peptidoglycan. The chain is Diaminopimelate epimerase from Caulobacter vibrioides (strain ATCC 19089 / CIP 103742 / CB 15) (Caulobacter crescentus).